A 338-amino-acid chain; its full sequence is Glycerol-3-phosphate dehydrogenase [NAD(P)+] (338 aa).

Residues S14, Y15, H35, and K109 each coordinate NADPH. Sn-glycerol 3-phosphate is bound by residues K109, G138, and T140. An NADPH-binding site is contributed by A142. Sn-glycerol 3-phosphate-binding residues include K194, D247, S257, R258, and N259. K194 functions as the Proton acceptor in the catalytic mechanism. R258 contributes to the NADPH binding site. V282 and E284 together coordinate NADPH.

Belongs to the NAD-dependent glycerol-3-phosphate dehydrogenase family.

The protein localises to the cytoplasm. It carries out the reaction sn-glycerol 3-phosphate + NAD(+) = dihydroxyacetone phosphate + NADH + H(+). The catalysed reaction is sn-glycerol 3-phosphate + NADP(+) = dihydroxyacetone phosphate + NADPH + H(+). The protein operates within membrane lipid metabolism; glycerophospholipid metabolism. Its function is as follows. Catalyzes the reduction of the glycolytic intermediate dihydroxyacetone phosphate (DHAP) to sn-glycerol 3-phosphate (G3P), the key precursor for phospholipid synthesis. This is Glycerol-3-phosphate dehydrogenase [NAD(P)+] from Sodalis glossinidius (strain morsitans).